A 206-amino-acid polypeptide reads, in one-letter code: Small ribosomal subunit protein uS4 (206 aa).

Residues 27-47 form a disordered region; that stretch reads PSESKCNMNAAPGQHGGRRGR. The S4 RNA-binding domain occupies 96 to 158; the sequence is QRLDNVVYRM…SRKQIRIQSA (63 aa).

The protein belongs to the universal ribosomal protein uS4 family. As to quaternary structure, part of the 30S ribosomal subunit. Contacts protein S5. The interaction surface between S4 and S5 is involved in control of translational fidelity.

Its function is as follows. One of the primary rRNA binding proteins, it binds directly to 16S rRNA where it nucleates assembly of the body of the 30S subunit. With S5 and S12 plays an important role in translational accuracy. The protein is Small ribosomal subunit protein uS4 of Dichelobacter nodosus (strain VCS1703A).